The sequence spans 556 residues: Phosphoenolpyruvate-protein phosphotransferase (556 aa).

His-186 serves as the catalytic Tele-phosphohistidine intermediate. Arg-288 and Arg-325 together coordinate phosphoenolpyruvate. Mg(2+)-binding residues include Glu-415 and Asp-439. Phosphoenolpyruvate is bound by residues 438–439 (ND) and Arg-449. Cys-486 functions as the Proton donor in the catalytic mechanism.

The protein belongs to the PEP-utilizing enzyme family. In terms of assembly, homodimer. Requires Mg(2+) as cofactor.

It localises to the cytoplasm. It carries out the reaction L-histidyl-[protein] + phosphoenolpyruvate = N(pros)-phospho-L-histidyl-[protein] + pyruvate. Functionally, general (non sugar-specific) component of the phosphoenolpyruvate-dependent sugar phosphotransferase system (sugar PTS). This major carbohydrate active-transport system catalyzes the phosphorylation of incoming sugar substrates concomitantly with their translocation across the cell membrane. Enzyme I transfers the phosphoryl group from phosphoenolpyruvate (PEP) to the phosphoryl carrier protein (HPr). This Streptomyces coelicolor (strain ATCC BAA-471 / A3(2) / M145) protein is Phosphoenolpyruvate-protein phosphotransferase (ptsI).